The following is a 435-amino-acid chain: Rho GTPase-activating protein 4 (435 aa).

The segment at 1–59 (MAKVLKSSQSCHFPSPSSSSSTSCGGGNDGSNRDPHSPFNISRREEEEEEEERSEKERE) is disordered. Residues 7 to 23 (SSQSCHFPSPSSSSSTS) are compositionally biased toward low complexity. One can recognise a CRIB domain in the interval 93–106 (IGVPTDVRHVAHVT). Residues 138–319 (VSTESMQLSY…LIVKTLKDRK (182 aa)) enclose the Rho-GAP domain. The interval 321-343 (SRDKLVPASNPSPRDHNGDQSSS) is disordered.

Its function is as follows. Acts as a GTPase activator for the Rac-type GTPase by converting it to an inactive GDP-bound state. Acts as a negative feedback regulator in tolerance to oxygen deprivation which requires ARAC4/ROP2. In Arabidopsis thaliana (Mouse-ear cress), this protein is Rho GTPase-activating protein 4 (ROPGAP4).